A 208-amino-acid polypeptide reads, in one-letter code: V-type ATP synthase subunit D (208 aa).

This sequence belongs to the V-ATPase D subunit family.

Produces ATP from ADP in the presence of a proton gradient across the membrane. This Chlamydia abortus (strain DSM 27085 / S26/3) (Chlamydophila abortus) protein is V-type ATP synthase subunit D.